Reading from the N-terminus, the 275-residue chain is Dermonecrotic toxin LamSicTox-alphaIV1i (275 aa).

The active site involves His-5. Mg(2+) contacts are provided by Glu-25 and Asp-27. Residue His-41 is the Nucleophile of the active site. Cystine bridges form between Cys-45–Cys-51 and Cys-47–Cys-192. Asp-85 contributes to the Mg(2+) binding site.

Belongs to the arthropod phospholipase D family. Class II subfamily. The cofactor is Mg(2+). In terms of tissue distribution, expressed by the venom gland.

It localises to the secreted. It catalyses the reaction an N-(acyl)-sphingosylphosphocholine = an N-(acyl)-sphingosyl-1,3-cyclic phosphate + choline. It carries out the reaction an N-(acyl)-sphingosylphosphoethanolamine = an N-(acyl)-sphingosyl-1,3-cyclic phosphate + ethanolamine. The enzyme catalyses a 1-acyl-sn-glycero-3-phosphocholine = a 1-acyl-sn-glycero-2,3-cyclic phosphate + choline. The catalysed reaction is a 1-acyl-sn-glycero-3-phosphoethanolamine = a 1-acyl-sn-glycero-2,3-cyclic phosphate + ethanolamine. Its function is as follows. Dermonecrotic toxins cleave the phosphodiester linkage between the phosphate and headgroup of certain phospholipids (sphingolipid and lysolipid substrates), forming an alcohol (often choline) and a cyclic phosphate. This toxin acts on sphingomyelin (SM). It may also act on ceramide phosphoethanolamine (CPE), lysophosphatidylcholine (LPC) and lysophosphatidylethanolamine (LPE), but not on lysophosphatidylserine (LPS), and lysophosphatidylglycerol (LPG). It acts by transphosphatidylation, releasing exclusively cyclic phosphate products as second products. Induces dermonecrosis, hemolysis, increased vascular permeability, edema, inflammatory response, and platelet aggregation. In Loxosceles amazonica (Recluse spider), this protein is Dermonecrotic toxin LamSicTox-alphaIV1i.